The following is a 233-amino-acid chain: Thrombin-like enzyme elegaxobin-1 (233 aa).

One can recognise a Peptidase S1 domain in the interval Val-1–Ala-224. 6 disulfides stabilise this stretch: Cys-7-Cys-138, Cys-25-Cys-41, Cys-73-Cys-231, Cys-117-Cys-185, Cys-149-Cys-164, and Cys-175-Cys-200. Active-site charge relay system residues include His-40 and Asp-85. The active-site Charge relay system is the Ser-179.

This sequence belongs to the peptidase S1 family. Snake venom subfamily. Monomer. Expressed by the venom gland.

Its subcellular location is the secreted. Thrombin-like snake venom serine protease that clots rabbit fibrinogen. Only the beta chain of fibrinogen (FGB) is cleaved, releasing fibrinopeptide B. Incubation with human fibrinogen alpha and beta resulted in cleavage of both fibrinogen chains but generated neither fibrinopeptide A nor fibrinopeptide B. Promotes clotting of rabbit fibrinogen, but not bovine or human fibrinogen. The sequence is that of Thrombin-like enzyme elegaxobin-1 from Protobothrops elegans (Elegant pitviper).